We begin with the raw amino-acid sequence, 184 residues long: MESFSSKSLALQAEKKLLSKMAGRSVAHLFIDETSSEVLDELYRVSKEYTHSRPQAQRVIKDLIKVAVKVAVLHRNGSFGPSELALATRFRQKLRQGAMTALSFGEVDFTFEAAVLAGLLIECRDVLLELVEHHLTPKSHGRIRHVFDHFSDPGLLTALYGPDFTQHLGKICDGLRKMLDEGKL.

Ser-3 is subject to Phosphoserine.

Belongs to the TNFAIP8 family. TNFAIP8L2 subfamily. In terms of assembly, may interact with CASP8; however, such result is unclear since could not reproduce the interaction with CASP8. Interacts with RAC1. Phosphorylated by TAK1/MAP3K7; this phosphorylation triggers association with BTRC and subsequent ubiquitination and degradation. In terms of processing, ubiquitinated in a BTRC-depdent manner; leading to degradation mediated through the proteasome pathway.

It is found in the cytoplasm. The protein localises to the nucleus. Its subcellular location is the lysosome. Acts as a negative regulator of innate and adaptive immunity by maintaining immune homeostasis. Plays a regulatory role in the Toll-like signaling pathway by determining the strength of LPS-induced signaling and gene expression. Inhibits TCR-mediated T-cell activation and negatively regulate T-cell function to prevent hyperresponsiveness. Also inhibits autolysosome formation via negatively modulating MTOR activation by interacting with RAC1 and promoting the disassociation of the RAC1-MTOR complex. Plays an essential role in NK-cell biology by acting as a checkpoint and displaying an expression pattern correlating with NK-cell maturation process and by negatively regulating NK-cell maturation and antitumor immunity. Mechanistically, suppresses IL-15-triggered mTOR activity in NK-cells. This is Tumor necrosis factor alpha-induced protein 8-like protein 2 (TNFAIP8L2) from Callithrix jacchus (White-tufted-ear marmoset).